The sequence spans 1301 residues: MSYKKTLISKNFFFIKALNCSVSAGYVEKTGCKLPVQFSMEIPNLIDVQRQSFYSFIEYGLKEAFQKPLRFSTTKHDLEIRFFPEGIQFRKPDFTQKQAVVLGKIYGSAVYIPVGIHSKKSSTFRIEWLFVGILPIMTRQGHFVVNGVSRVVLHQMVRNPGIYTLPIHPRTKIGTLRIVPEKGGWIHITVDKKHRVWFLTRSLRRKVSLLIFLQAVGIPFHDIFLRLEHSKILQNSFVAELGEGSARHDDVLERAGLYAHPATQEEAWQYLYSHFKEYSPYAHKNLAAKEQTAREFFYSTLWNKDKLILGHIGRQQFREKIGSIEPLENTSLTREDLLEATQALLSLMHKKRVVDEIDSLTQKRIRGCDEFLLEHLATGMKEFELFFRRKVTFLPATKSITGAENPFRSLWRQNKAVFSKTVSKSWKRFFTSGTLGQFMDQTNSLAETTHKRRLTVLGPGGISGKQTTIQIRGIHPTYYGRLCPIETPEGKNAGLVNSFTVLSVLSKYGARTLTTPFYQVYKGQVQKTLPPLRVSPRQEYKLIEAPADIQLTAWNVLPKTHLPVRKELNFHSDVATRITTQSVGILQNISVATSLIPFLEHNDANRALMGSNMQRQAVPLLKPQAPLVGTGLESRVIGDVNHSMQASKTGFITKVSSTKIQVLSPRKTKAQVSVFSHVLFSLNKKKKKSLLNSEKQSFSKNGIFFIKTLQQKSNLKNIFFSAQKALYQENSSFDLKFEAQNRLFIPKMTFSLAQNFSRKIPFLSFFLKKKKERPRNPKKFFRSSDSFVNWKHKKLHSEDFRKNKVEITTTYSLIQYQRTNQSTCFSERPILPENEWVEKGDLLADGASSSQGKLSIGQNVLVAYLPWEGYNFEDAILISQRLVDQEIFTSLHMDHYDIAVQNTQYGLERITNLIPLKISDSTRDIYKMGNLDSRGLVEIGSWVEPGDYLVGKMSPLDPKSPPLQSPHEKLYNVILQREKTSFRNTSLRVPKGVQGFVLGVQILPSQEPDVAALAEKDEILRVRVLLLQRRKIQVGDKMAGRHGNKGIVSLILPRQDMPYLPDGTPVDIVLNPLGVPSRMNVGQILECLLGLAGHFLHERYTTYLFDEQYGAEASRSLVYSKLYQASLKTRNPWVFEPHHPGKIRVFDGRTGLTFDQPITAGYAYILKLVHLVDDKIHARPTGPYSAITQQPVKGRARNGGQRLGEMEVWALQAYGAAHTLHEFFTVKSDDLDGRQQAVLNIYANKPVTTGNPESFKLILRELQALCFNFQVYEKYSYYSEYTQKTRVSIFPISFIKLEDVL.

The protein belongs to the RNA polymerase beta chain family. In plastids the minimal PEP RNA polymerase catalytic core is composed of four subunits: alpha, beta, beta', and beta''. When a (nuclear-encoded) sigma factor is associated with the core the holoenzyme is formed, which can initiate transcription.

The protein resides in the plastid. The protein localises to the chloroplast. The enzyme catalyses RNA(n) + a ribonucleoside 5'-triphosphate = RNA(n+1) + diphosphate. In terms of biological role, DNA-dependent RNA polymerase catalyzes the transcription of DNA into RNA using the four ribonucleoside triphosphates as substrates. The protein is DNA-directed RNA polymerase subunit beta of Chlorella vulgaris (Green alga).